Consider the following 368-residue polypeptide: Phospho-N-acetylmuramoyl-pentapeptide-transferase (368 aa).

9 helical membrane-spanning segments follow: residues 50 to 70, 95 to 115, 117 to 137, 156 to 176, 183 to 203, 218 to 238, 242 to 262, 284 to 304, and 347 to 367; these read LLAL…VVPL, PTMG…ILAG, SPLV…GWLD, LCLQ…QQGW, ITLP…LAVF, LDGL…LWLA, PAIA…LLHN, AIAI…LFVL, and TQVV…CWLL.

Belongs to the glycosyltransferase 4 family. MraY subfamily. The cofactor is Mg(2+).

The protein resides in the cell inner membrane. The enzyme catalyses UDP-N-acetyl-alpha-D-muramoyl-L-alanyl-gamma-D-glutamyl-meso-2,6-diaminopimeloyl-D-alanyl-D-alanine + di-trans,octa-cis-undecaprenyl phosphate = di-trans,octa-cis-undecaprenyl diphospho-N-acetyl-alpha-D-muramoyl-L-alanyl-D-glutamyl-meso-2,6-diaminopimeloyl-D-alanyl-D-alanine + UMP. It participates in cell wall biogenesis; peptidoglycan biosynthesis. Catalyzes the initial step of the lipid cycle reactions in the biosynthesis of the cell wall peptidoglycan: transfers peptidoglycan precursor phospho-MurNAc-pentapeptide from UDP-MurNAc-pentapeptide onto the lipid carrier undecaprenyl phosphate, yielding undecaprenyl-pyrophosphoryl-MurNAc-pentapeptide, known as lipid I. The chain is Phospho-N-acetylmuramoyl-pentapeptide-transferase from Synechococcus sp. (strain ATCC 27144 / PCC 6301 / SAUG 1402/1) (Anacystis nidulans).